We begin with the raw amino-acid sequence, 597 residues long: Protein disulfide isomerase-like 1-4 (597 aa).

Residues 1 to 25 (MAFRVLLLFSLTALLIFSAVSPSFA) form the signal peptide. 2 stretches are compositionally biased toward acidic residues: residues 37–49 (LSFL…DDVP) and 61–84 (DEFE…EGDF). The interval 37 to 101 (LSFLEDLKED…SDPLPTPEID (65 aa)) is disordered. Positions 85 to 208 (SDLGNPDSDP…IVTWVKKKIG (124 aa)) constitute a Thioredoxin 1 domain. The N-linked (GlcNAc...) asparagine glycan is linked to Asn-112. Catalysis depends on nucleophile residues Cys-132 and Cys-135. A disulfide bridge links Cys-132 with Cys-135. Residues Asn-213 and Asn-342 are each glycosylated (N-linked (GlcNAc...) asparagine). Residues 429–550 (FYKSDPIPEK…FYKFLRKHAT (122 aa)) enclose the Thioredoxin 2 domain. Residues Cys-471 and Cys-474 each act as nucleophile in the active site. Residues Cys-471 and Cys-474 are joined by a disulfide bond. Asn-524 carries an N-linked (GlcNAc...) asparagine glycan. Residues 555 to 597 (LEKPASTESPKTAESTPKVETTETKESPDSTTKSSQSDSKDEL) form a disordered region. Positions 560–573 (STESPKTAESTPKV) are enriched in polar residues. The short motif at 594–597 (KDEL) is the Prevents secretion from ER element.

Belongs to the protein disulfide isomerase family. Interacts with MEE8 and MED37A. Expressed in germinating seedling, including the cotyledons and hypocotyl, in vascular tissues, in pollen grains, root tips, leaf trichomes, developing seeds and siliques.

Its subcellular location is the endoplasmic reticulum lumen. The protein resides in the golgi apparatus. It localises to the vacuole. The protein localises to the nucleus. It is found in the secreted. Its subcellular location is the cell wall. The catalysed reaction is Catalyzes the rearrangement of -S-S- bonds in proteins.. In terms of biological role, acts as a protein-folding catalyst that interacts with nascent polypeptides to catalyze the formation, isomerization, and reduction or oxidation of disulfide bonds. This chain is Protein disulfide isomerase-like 1-4 (PDIL1-4), found in Arabidopsis thaliana (Mouse-ear cress).